A 326-amino-acid chain; its full sequence is 3-methyl-2-oxobutanoate hydroxymethyltransferase 1 (326 aa).

Mg(2+) contacts are provided by Asp-52, Asp-91, and Glu-122. 3-methyl-2-oxobutanoate is bound by residues Asp-52 to Ser-53 and Asp-91. Residue Glu-189 is the Proton acceptor of the active site.

The protein belongs to the PanB family. In terms of assembly, homodecamer; pentamer of dimers. Mg(2+) is required as a cofactor.

It localises to the cytoplasm. The catalysed reaction is 3-methyl-2-oxobutanoate + (6R)-5,10-methylene-5,6,7,8-tetrahydrofolate + H2O = 2-dehydropantoate + (6S)-5,6,7,8-tetrahydrofolate. The protein operates within cofactor biosynthesis; (R)-pantothenate biosynthesis; (R)-pantoate from 3-methyl-2-oxobutanoate: step 1/2. Functionally, catalyzes the reversible reaction in which hydroxymethyl group from 5,10-methylenetetrahydrofolate is transferred onto alpha-ketoisovalerate to form ketopantoate. The chain is 3-methyl-2-oxobutanoate hydroxymethyltransferase 1 from Bradyrhizobium diazoefficiens (strain JCM 10833 / BCRC 13528 / IAM 13628 / NBRC 14792 / USDA 110).